The chain runs to 264 residues: Elongator complex protein 6 (264 aa).

The protein belongs to the ELP6 family. As to quaternary structure, component of the elongator complex.

Its subcellular location is the cytoplasm. The protein localises to the nucleus. It functions in the pathway tRNA modification; 5-methoxycarbonylmethyl-2-thiouridine-tRNA biosynthesis. In terms of biological role, component of the elongator complex which is required for multiple tRNA modifications, including mcm5U (5-methoxycarbonylmethyl uridine), mcm5s2U (5-methoxycarbonylmethyl-2-thiouridine), and ncm5U (5-carbamoylmethyl uridine). The elongator complex catalyzes formation of carboxymethyluridine in the wobble base at position 34 in tRNAs. In Danio rerio (Zebrafish), this protein is Elongator complex protein 6 (elp6).